The chain runs to 161 residues: UPF0225 protein HI_0277 (161 aa).

This sequence belongs to the UPF0225 family.

The chain is UPF0225 protein HI_0277 from Haemophilus influenzae (strain ATCC 51907 / DSM 11121 / KW20 / Rd).